Reading from the N-terminus, the 605-residue chain is Elongation factor 4 (605 aa).

One can recognise a tr-type G domain in the interval 10–192 (KNIRNFAIVA…AIVMRLPPPH (183 aa)). GTP contacts are provided by residues 22-27 (DHGKST) and 139-142 (NKVD).

The protein belongs to the TRAFAC class translation factor GTPase superfamily. Classic translation factor GTPase family. LepA subfamily.

The protein resides in the cell inner membrane. It carries out the reaction GTP + H2O = GDP + phosphate + H(+). Functionally, required for accurate and efficient protein synthesis under certain stress conditions. May act as a fidelity factor of the translation reaction, by catalyzing a one-codon backward translocation of tRNAs on improperly translocated ribosomes. Back-translocation proceeds from a post-translocation (POST) complex to a pre-translocation (PRE) complex, thus giving elongation factor G a second chance to translocate the tRNAs correctly. Binds to ribosomes in a GTP-dependent manner. This is Elongation factor 4 from Chelativorans sp. (strain BNC1).